A 313-amino-acid chain; its full sequence is Ribosomal RNA small subunit methyltransferase H (313 aa).

S-adenosyl-L-methionine-binding positions include 35-37, aspartate 55, phenylalanine 79, aspartate 100, and glutamine 107; that span reads GGH.

This sequence belongs to the methyltransferase superfamily. RsmH family.

The protein resides in the cytoplasm. The enzyme catalyses cytidine(1402) in 16S rRNA + S-adenosyl-L-methionine = N(4)-methylcytidine(1402) in 16S rRNA + S-adenosyl-L-homocysteine + H(+). Functionally, specifically methylates the N4 position of cytidine in position 1402 (C1402) of 16S rRNA. This is Ribosomal RNA small subunit methyltransferase H from Burkholderia multivorans (strain ATCC 17616 / 249).